Consider the following 143-residue polypeptide: Aspartate 1-decarboxylase (143 aa).

Ser-25 serves as the catalytic Schiff-base intermediate with substrate; via pyruvic acid. Ser-25 bears the Pyruvic acid (Ser) mark. Thr-57 contacts substrate. Tyr-58 (proton donor) is an active-site residue. 73–75 lines the substrate pocket; that stretch reads GAA.

It belongs to the PanD family. Heterooctamer of four alpha and four beta subunits. It depends on pyruvate as a cofactor. Post-translationally, is synthesized initially as an inactive proenzyme, which is activated by self-cleavage at a specific serine bond to produce a beta-subunit with a hydroxyl group at its C-terminus and an alpha-subunit with a pyruvoyl group at its N-terminus.

Its subcellular location is the cytoplasm. The catalysed reaction is L-aspartate + H(+) = beta-alanine + CO2. Its pathway is cofactor biosynthesis; (R)-pantothenate biosynthesis; beta-alanine from L-aspartate: step 1/1. Functionally, catalyzes the pyruvoyl-dependent decarboxylation of aspartate to produce beta-alanine. This is Aspartate 1-decarboxylase from Mycolicibacterium paratuberculosis (strain ATCC BAA-968 / K-10) (Mycobacterium paratuberculosis).